We begin with the raw amino-acid sequence, 451 residues long: Inositol-pentakisphosphate 2-kinase (451 aa).

An N-acetylmethionine modification is found at M1. Residues 19–22 (GGAN) and R40 contribute to the ATP site. Positions 45 and 130 each coordinate substrate. ATP is bound by residues 147–149 (NDH) and 166–168 (EIK). Residues 166–170 (EIKPK) carry the EXKPK motif motif. K170, K200, and N238 together coordinate substrate. An ATP-binding site is contributed by R241. 4 residues coordinate Zn(2+): H320, C330, C333, and H346. Substrate is bound at residue D368. Residue D407 participates in ATP binding. K411, R415, and Y419 together coordinate substrate.

It belongs to the IPK1 type 2 family. Requires Zn(2+) as cofactor. As to expression, strongly expressed in leaves and cauline leaves. Weakly expressed in siliques and flowers. In flower, it is expressed in the major organs of developing flower buds. Strongly expressed in sepals, petals, in the male and female organs of immature and mature flower buds. Strongly expressed in the gynoecium and carpels which are fused to form the gynoecium. Also expressed in the transmitting tissue and ovules.

It carries out the reaction 1D-myo-inositol 1,3,4,5,6-pentakisphosphate + ATP = 1D-myo-inositol hexakisphosphate + ADP + H(+). In terms of biological role, phosphorylates Ins(1,3,4,5,6)P5 at position 2 to form Ins(1,2,3,4,5,6)P6 (InsP6 or phytate). Phytate is a regulator of intracellular signaling, a highly abundant animal antinutrient, and a phosphate store in plant seeds. Also phosphorylates Ins(1,3,4,6)P4 and Ins(1,4,5,6)P4 to produce Ins(1,2,3,4,6)P5 and Ins(1,2,4,5,6)P5. This chain is Inositol-pentakisphosphate 2-kinase (IPK1), found in Arabidopsis thaliana (Mouse-ear cress).